A 350-amino-acid chain; its full sequence is MDINLFDFHLPEELIAQVPLEERETSRLMVLDRETGDIEHKHFTDILSYLHEGDCLVLNETKVMPARLHGVKEDTGAHIEVLLLKQEEGDKWETLVKPAKRVKEGTVISFGEGKLKATCTGTADQGGRQLEFSYDGIFYEILDELGEMPLPPYIKETLEDRDRYQTVYAKEIGSAAAPTAGLHFTEELLEKLKQKGVELAFITLHVGLGTFRPVSADTIEEHHMHAEYYHMSEETAALLNRVKENGGRIITVGTTSTRTLETIATDHNGKLCAASGWTDIFMYPGYEFKAIDGLITNFHLPKSTLIMLVSAFANRDNVLHAYNEAVKEKYRFFSFGDAMFIASHAKMGNK.

It belongs to the QueA family. Monomer.

It localises to the cytoplasm. It catalyses the reaction 7-aminomethyl-7-carbaguanosine(34) in tRNA + S-adenosyl-L-methionine = epoxyqueuosine(34) in tRNA + adenine + L-methionine + 2 H(+). Its pathway is tRNA modification; tRNA-queuosine biosynthesis. Transfers and isomerizes the ribose moiety from AdoMet to the 7-aminomethyl group of 7-deazaguanine (preQ1-tRNA) to give epoxyqueuosine (oQ-tRNA). The protein is S-adenosylmethionine:tRNA ribosyltransferase-isomerase of Bacillus cereus (strain 03BB102).